Reading from the N-terminus, the 259-residue chain is Ribonuclease T2-B (259 aa).

The first 29 residues, 1 to 29 (MAPAEARGALPGWISVLGWGLALCSLCGA), serve as a signal peptide directing secretion. Cysteines 53 and 59 form a disulfide. The active site involves His69. 3 disulfides stabilise this stretch: Cys79–Cys125, Cys188–Cys244, and Cys206–Cys217. N-linked (GlcNAc...) asparagine glycans are attached at residues Asn80 and Asn110. Catalysis depends on residues Glu118 and His122. Asn216 carries N-linked (GlcNAc...) asparagine glycosylation.

It belongs to the RNase T2 family.

The protein resides in the secreted. It is found in the lysosome lumen. It localises to the endoplasmic reticulum lumen. Its subcellular location is the mitochondrion intermembrane space. It catalyses the reaction a ribonucleotidyl-ribonucleotide-RNA + H2O = a 3'-end 3'-phospho-ribonucleotide-RNA + a 5'-end dephospho-ribonucleoside-RNA + H(+). The catalysed reaction is an adenylyl-uridine-RNA = a 3'-end 2',3'-cyclophospho-AMP-RNA + a 5'-end dephospho-uridine-RNA. It carries out the reaction a guanylyl-uridine-RNA = a 3'-end 2',3'-cyclophospho-GMP-RNA + a 5'-end dephospho-uridine-RNA. With respect to regulation, inhibited by Zn(2+) and Cu(2+). Its function is as follows. Ribonuclease that plays an essential role in innate immune response by recognizing and degrading RNAs from microbial pathogens that are subsequently sensed by TLR8. Cleaves preferentially single-stranded RNA molecules between purine and uridine residues, which critically contributes to the supply of catabolic uridine and the generation of purine-2',3'-cyclophosphate-terminated oligoribonucleotides. In turn, RNase T2 degradation products promote the RNA-dependent activation of TLR8. In plasmacytoid dendritic cells, it cooperates with PLD3 or PLD4 5'-&gt;3' exonucleases to process RNA fragments and release 2',3'-cyclic guanosine monophosphate (2',3'-cGMP), a potent stimulatory ligand for TLR7. Also plays a key role in degradation of mitochondrial RNA and processing of non-coding RNA imported from the cytosol into mitochondria. Participates as well in degradation of mitochondrion-associated cytosolic rRNAs. This chain is Ribonuclease T2-B, found in Mus musculus (Mouse).